Here is a 376-residue protein sequence, read N- to C-terminus: uncharacterized protein (376 aa).

Serine 59 carries the phosphoserine modification. The 229-residue stretch at 139–367 folds into the Rho-GAP domain; the sequence is VAIEITVQRQ…CLIEHHNAIF (229 aa). The segment at 307–338 is disordered; the sequence is RPSRSPKKSNDFETATPWDLLSDEGEGPDASS.

This is an uncharacterized protein from Arabidopsis thaliana (Mouse-ear cress).